Consider the following 291-residue polypeptide: Insulin-like growth factor-binding protein 3 (291 aa).

A signal peptide spans 1–27; sequence MQRARPTLWAAALTLLVLLRGPPVARA. Residues 28-134 form an IGF-binding region; that stretch reads GASSAGLGPV…AYLLPAPPAP (107 aa). The 82-residue stretch at 36–117 folds into the IGFBP N-terminal domain; the sequence is PVVRCEPCDA…LDGRGLCVNA (82 aa). 6 cysteine pairs are disulfide-bonded: cysteine 40/cysteine 67, cysteine 43/cysteine 69, cysteine 51/cysteine 70, cysteine 58/cysteine 73, cysteine 81/cysteine 94, and cysteine 88/cysteine 114. 2 N-linked (GlcNAc...) (complex) asparagine glycosylation sites follow: asparagine 116 and asparagine 136. Disordered stretches follow at residues 130-162 and 189-211; these read APPA…RVSD and DYES…TEYG. Residues 146-156 are compositionally biased toward low complexity; the sequence is AGSVESPSVSS. Serine 148 is subject to Phosphoserine; by FAM20C. Over residues 191-202 the composition is skewed to polar residues; that stretch reads ESQSTDTQNFSS. A Phosphoserine; by CK2 modification is found at serine 194. Asparagine 199 carries an N-linked (GlcNAc...) (complex) asparagine glycan. Serine 201 carries the phosphoserine; by FAM20C modification. Serine 202 bears the Phosphoserine; by CK2 mark. The Thyroglobulin type-1 domain occupies 210 to 285; sequence YGPCRREMED…TTKGKEDVHC (76 aa). Disulfide bonds link cysteine 213-cysteine 240, cysteine 251-cysteine 262, and cysteine 264-cysteine 285.

Interacts with XLKD1. Binds IGF2 more than IGF1. Forms a ternary complex of about 140 to 150 kDa with IGF1 or IGF2 and a 85 kDa glycoprotein (ALS). Interacts with humanin; humanin competes with importin KPNB1 for binding to IGFBP3, blocking IGFBP3 nuclear import and IGFBP3-mediated apoptosis. Interacts with TMEM219. Interacts with RXRA; this interaction modulates the transcriptional activity of RXRA. Interacts with LRP1; this interaction mediates cell growth inhibition independent of IGF1. Phosphorylated by FAM20C in the extracellular medium. Phosphorylated by CK2; resulting in decreased nuclear localization. Expressed by most tissues. Present in plasma.

The protein localises to the secreted. It localises to the nucleus. Its function is as follows. Multifunctional protein that plays a critical role in regulating the availability of IGFs such as IGF1 and IGF2 to their receptors and thereby regulates IGF-mediated cellular processes including proliferation, differentiation, and apoptosis in a cell-type specific manner. Also exhibits IGF-independent antiproliferative and apoptotic effects mediated by its receptor TMEM219/IGFBP-3R. Inhibits the positive effect of humanin on insulin sensitivity. Promotes testicular germ cell apoptosis. Acts via LRP-1/alpha2M receptor, also known as TGF-beta type V receptor, to mediate cell growth inhibition independent of IGF1. Mechanistically, induces serine-specific dephosphorylation of IRS1 or IRS2 upon ligation to its receptor, leading to the inhibitory cascade. In the nucleus, interacts with transcription factors such as retinoid X receptor-alpha/RXRA to regulate transcriptional signaling and apoptosis. The protein is Insulin-like growth factor-binding protein 3 (IGFBP3) of Homo sapiens (Human).